Consider the following 43-residue polypeptide: Protein PsbN (43 aa).

A helical transmembrane segment spans residues Ile3 to Leu23.

The protein belongs to the PsbN family.

It is found in the plastid. Its subcellular location is the chloroplast thylakoid membrane. Its function is as follows. May play a role in photosystem I and II biogenesis. The protein is Protein PsbN of Euonymus alatus (Burning bush).